The chain runs to 249 residues: Small ribosomal subunit protein uS3 (249 aa).

The 72-residue stretch at 23-94 (LNEFFTRELS…TVELYAEKVQ (72 aa)) folds into the KH type-2 domain. Residues Ser-32, Ser-37, Ser-106, and Ser-141 each carry the phosphoserine modification.

It belongs to the universal ribosomal protein uS3 family. In terms of assembly, component of the small ribosomal subunit (SSU). Mature yeast ribosomes consist of a small (40S) and a large (60S) subunit. The 40S small subunit contains 1 molecule of ribosomal RNA (18S rRNA) and at least 33 different proteins. The large 60S subunit contains 3 rRNA molecules (25S, 5.8S and 5S rRNA) and at least 46 different proteins.

The protein localises to the cytoplasm. Its function is as follows. Component of the ribosome, a large ribonucleoprotein complex responsible for the synthesis of proteins in the cell. The small ribosomal subunit (SSU) binds messenger RNAs (mRNAs) and translates the encoded message by selecting cognate aminoacyl-transfer RNA (tRNA) molecules. The large subunit (LSU) contains the ribosomal catalytic site termed the peptidyl transferase center (PTC), which catalyzes the formation of peptide bonds, thereby polymerizing the amino acids delivered by tRNAs into a polypeptide chain. The nascent polypeptides leave the ribosome through a tunnel in the LSU and interact with protein factors that function in enzymatic processing, targeting, and the membrane insertion of nascent chains at the exit of the ribosomal tunnel. The polypeptide is Small ribosomal subunit protein uS3 (rps3) (Schizosaccharomyces pombe (strain 972 / ATCC 24843) (Fission yeast)).